A 448-amino-acid chain; its full sequence is Tubulin alpha-2 chain (448 aa).

GTP contacts are provided by Gln11, Glu69, Ser138, Gly142, Thr143, Thr177, Asn204, and Asn226. Glu69 serves as a coordination point for Mg(2+). Residue Glu252 is part of the active site. Residues 428–448 form a disordered region; sequence KDYEEVGADSNEGGEEEGEEY. Over residues 429 to 448 the composition is skewed to acidic residues; that stretch reads DYEEVGADSNEGGEEEGEEY.

The protein belongs to the tubulin family. As to quaternary structure, dimer of alpha and beta chains. A typical microtubule is a hollow water-filled tube with an outer diameter of 25 nm and an inner diameter of 15 nM. Alpha-beta heterodimers associate head-to-tail to form protofilaments running lengthwise along the microtubule wall with the beta-tubulin subunit facing the microtubule plus end conferring a structural polarity. Microtubules usually have 13 protofilaments but different protofilament numbers can be found in some organisms and specialized cells. Requires Mg(2+) as cofactor. In terms of processing, undergoes a tyrosination/detyrosination cycle, the cyclic removal and re-addition of a C-terminal tyrosine residue. As to expression, expressed in intestine, pharyngeal muscle cells, and a subset of neurons.

The protein localises to the cytoplasm. It is found in the cytoskeleton. The catalysed reaction is GTP + H2O = GDP + phosphate + H(+). Tubulin is the major constituent of microtubules, a cylinder consisting of laterally associated linear protofilaments composed of alpha- and beta-tubulin heterodimers. Microtubules grow by the addition of GTP-tubulin dimers to the microtubule end, where a stabilizing cap forms. Below the cap, tubulin dimers are in GDP-bound state, owing to GTPase activity of alpha-tubulin. Required for the normal dynamic behavior of the non-centrosomal microtubules in the epidermal syncytium. Involved in the redistribution of microtubule end-binding protein EB1/ebp-2 caused by wounding. Required to modulate expression in the epidermis of antimicrobial peptides, such as nlp-29, after wounding, or fungal infection. In Caenorhabditis elegans, this protein is Tubulin alpha-2 chain (tba-2).